Consider the following 574-residue polypeptide: Amino-acid acetyltransferase, mitochondrial (574 aa).

Residues 1–13 constitute a mitochondrion transit peptide; sequence MWRRIFAHELKYD. Residues 392-560 enclose the N-acetyltransferase domain; that stretch reads KGAKPSSNSP…KRLREFMRSV (169 aa).

This sequence belongs to the acetyltransferase family. In terms of assembly, interacts with the acetylglutamate kinase chain of AGR5,6.

Its subcellular location is the mitochondrion. It carries out the reaction L-glutamate + acetyl-CoA = N-acetyl-L-glutamate + CoA + H(+). Its pathway is amino-acid biosynthesis; L-arginine biosynthesis; N(2)-acetyl-L-ornithine from L-glutamate: step 1/4. Its activity is regulated as follows. Feedback inhibition by L-arginine. Functionally, N-acetylglutamate synthase involved in arginine biosynthesis. This chain is Amino-acid acetyltransferase, mitochondrial (ARG2), found in Saccharomyces cerevisiae (strain RM11-1a) (Baker's yeast).